Here is a 743-residue protein sequence, read N- to C-terminus: Ectonucleotide pyrophosphatase/phosphodiesterase C27A7.3 (743 aa).

Residues 1 to 23 (MSNRVVDVNSKKTGTSWKKKLMK) are Cytoplasmic-facing. The helical; Signal-anchor for type II membrane protein transmembrane segment at 24–44 (IVIWSLAMLSFIAGLVLLGLV) threads the bilayer. Residues 45–743 (AAATISGSKN…LRRNITTSLW (699 aa)) lie on the Lumenal side of the membrane. The Zn(2+) site is built by D87 and T123. The active-site Nucleophile is T123. N-linked (GlcNAc...) asparagine glycosylation is present at N195. Zn(2+) is bound by residues D243, H247, D286, and H287. 2 N-linked (GlcNAc...) asparagine glycosylation sites follow: N293 and N320. Residue H383 participates in Zn(2+) binding. N-linked (GlcNAc...) asparagine glycosylation is found at N406, N434, and N536. Positions 635, 637, 639, 641, and 643 each coordinate Ca(2+). An N-linked (GlcNAc...) asparagine glycan is attached at N737.

Belongs to the nucleotide pyrophosphatase/phosphodiesterase family. It depends on Zn(2+) as a cofactor. Requires Ca(2+) as cofactor.

The protein localises to the membrane. Probable phosphodiesterase. The polypeptide is Ectonucleotide pyrophosphatase/phosphodiesterase C27A7.3 (Caenorhabditis elegans).